The sequence spans 158 residues: uncharacterized protein (158 aa).

Transmembrane regions (helical) follow at residues 66–86 (LLII…PWIM) and 94–114 (FFSL…SLTI).

It is found in the membrane. This is an uncharacterized protein from Saccharomyces cerevisiae (strain ATCC 204508 / S288c) (Baker's yeast).